The following is a 148-amino-acid chain: Hemoglobin subunit beta (148 aa).

In terms of domain architecture, Globin spans 3-148 (DWTDAERSAI…VVSALGRQYH (146 aa)). His-64 and His-93 together coordinate heme b.

It belongs to the globin family. In terms of assembly, heterotetramer of two alpha chains and two beta chains. As to expression, red blood cells.

Its function is as follows. Involved in oxygen transport from gills to the various peripheral tissues. In Oncorhynchus nerka (Sockeye salmon), this protein is Hemoglobin subunit beta (hbb).